The following is a 125-amino-acid chain: Large ribosomal subunit protein bL12 (125 aa).

This sequence belongs to the bacterial ribosomal protein bL12 family. In terms of assembly, homodimer. Part of the ribosomal stalk of the 50S ribosomal subunit. Forms a multimeric L10(L12)X complex, where L10 forms an elongated spine to which 2 to 4 L12 dimers bind in a sequential fashion. Binds GTP-bound translation factors.

In terms of biological role, forms part of the ribosomal stalk which helps the ribosome interact with GTP-bound translation factors. Is thus essential for accurate translation. This Azorhizobium caulinodans (strain ATCC 43989 / DSM 5975 / JCM 20966 / LMG 6465 / NBRC 14845 / NCIMB 13405 / ORS 571) protein is Large ribosomal subunit protein bL12.